The chain runs to 216 residues: Glycerol-3-phosphate acyltransferase (216 aa).

Transmembrane regions (helical) follow at residues Phe3–Ala23, Ile48–Val68, Phe82–Phe102, Phe112–Val132, Leu142–Leu162, and Glu166–His186.

The protein belongs to the PlsY family. Probably interacts with PlsX.

The protein resides in the cell inner membrane. It catalyses the reaction an acyl phosphate + sn-glycerol 3-phosphate = a 1-acyl-sn-glycero-3-phosphate + phosphate. It participates in lipid metabolism; phospholipid metabolism. Functionally, catalyzes the transfer of an acyl group from acyl-phosphate (acyl-PO(4)) to glycerol-3-phosphate (G3P) to form lysophosphatidic acid (LPA). This enzyme utilizes acyl-phosphate as fatty acyl donor, but not acyl-CoA or acyl-ACP. The sequence is that of Glycerol-3-phosphate acyltransferase from Leptospira interrogans serogroup Icterohaemorrhagiae serovar Lai (strain 56601).